Consider the following 357-residue polypeptide: MRLVLLFVLLLPVCLATRFHQKGLFDFMIEDEGSADMAPTDDPVISGFGPVCPFRCQCHLRVVQCSDLGLERVPKDLPPDTTLLDLQNNKITEIKEGDFKNLKNLHALILVNNKISKISPAAFAPLKKLERLYLSKNNLKELPENMPKSLQEIRAHENEISKLRKAVFNGLNQVIVLELGTNPLKSSGIENGAFQGMKRLSYIRIADTNITSIPKGLPPSLTELHLDGNKISKIDAEGLSGLTNLAKLGLSFNSISSVENGSLNNVPHLRELHLNNNELVRVPSGLGEHKYIQVVYLHNNKIASIGINDFCPLGYNTKKATYSGVSLFSNPVQYWEIQPSAFRCIHERSAVQIGNYK.

An N-terminal signal peptide occupies residues 1 to 16; sequence MRLVLLFVLLLPVCLA. A propeptide spanning residues 17-30 is cleaved from the precursor; the sequence is TRFHQKGLFDFMIE. Serine 46 carries an O-linked (Xyl...) (glycosaminoglycan) serine glycan. Disulfide bonds link cysteine 52–cysteine 58 and cysteine 56–cysteine 65. 12 LRR repeats span residues 71-91, 92-115, 116-139, 140-160, 161-184, 185-210, 211-231, 232-255, 256-279, 280-302, 303-332, and 333-357; these read ERVP…NNKI, TEIK…NNKI, SKIS…KNNL, KELP…ENEI, SKLR…TNPL, KSSG…DTNI, TSIP…GNKI, SKID…FNSI, SSVE…NNEL, VRVP…NNKI, ASIG…SNPV, and QYWE…GNYK. Asparagine 209 carries N-linked (GlcNAc...) asparagine glycosylation. Residue asparagine 260 is glycosylated (N-linked (GlcNAc...) asparagine). Cysteine 311 and cysteine 344 form a disulfide bridge.

Belongs to the small leucine-rich proteoglycan (SLRP) family. SLRP class I subfamily. In terms of assembly, binds to type I and type II collagen, to fibronectin and TGF-beta. Forms a ternary complex with MFAP2 and ELN. Post-translationally, the attached glycosaminoglycan chain can be either chondroitin sulfate or dermatan sulfate depending upon the tissue of origin.

It is found in the secreted. The protein resides in the extracellular space. The protein localises to the extracellular matrix. May affect the rate of fibrils formation. This is Decorin (DCN) from Gallus gallus (Chicken).